The following is a 388-amino-acid chain: Chorismate synthase (388 aa).

The NADP(+) site is built by arginine 39 and arginine 45. FMN is bound by residues 130–132, 251–252, glycine 296, 311–315, and arginine 337; these read RSS, NA, and KPIPT.

It belongs to the chorismate synthase family. Homotetramer. The cofactor is FMNH2.

The catalysed reaction is 5-O-(1-carboxyvinyl)-3-phosphoshikimate = chorismate + phosphate. Its pathway is metabolic intermediate biosynthesis; chorismate biosynthesis; chorismate from D-erythrose 4-phosphate and phosphoenolpyruvate: step 7/7. Functionally, catalyzes the anti-1,4-elimination of the C-3 phosphate and the C-6 proR hydrogen from 5-enolpyruvylshikimate-3-phosphate (EPSP) to yield chorismate, which is the branch point compound that serves as the starting substrate for the three terminal pathways of aromatic amino acid biosynthesis. This reaction introduces a second double bond into the aromatic ring system. The protein is Chorismate synthase of Streptococcus pneumoniae serotype 19F (strain G54).